We begin with the raw amino-acid sequence, 698 residues long: Methionine--tRNA ligase (698 aa).

The 'HIGH' region signature appears at 21 to 31; it reads PYANGPLHFGH. Zn(2+) is bound by residues Cys-153, Cys-156, Cys-166, and Cys-169. Positions 341 to 345 match the 'KMSKS' region motif; it reads QFSKS. Lys-344 provides a ligand contact to ATP. One can recognise a tRNA-binding domain in the interval 599–698; that stretch reads DFRKLDLRVG…EDVAPGSLVS (100 aa).

This sequence belongs to the class-I aminoacyl-tRNA synthetase family. MetG type 1 subfamily. Homodimer. Zn(2+) serves as cofactor.

The protein localises to the cytoplasm. It catalyses the reaction tRNA(Met) + L-methionine + ATP = L-methionyl-tRNA(Met) + AMP + diphosphate. Functionally, is required not only for elongation of protein synthesis but also for the initiation of all mRNA translation through initiator tRNA(fMet) aminoacylation. The protein is Methionine--tRNA ligase of Protochlamydia amoebophila (strain UWE25).